We begin with the raw amino-acid sequence, 274 residues long: Serine/threonine-protein kinase 1 (274 aa).

One can recognise a Protein kinase domain in the interval 17 to 265; sequence ARTALHLVNG…YEVIQKNTYW (249 aa). ATP contacts are provided by residues 23–31 and Lys-46; that span reads LVNGKFGKV. Catalysis depends on Asp-133, which acts as the Proton acceptor.

The protein belongs to the protein kinase superfamily. Ser/Thr protein kinase family.

The catalysed reaction is L-seryl-[protein] + ATP = O-phospho-L-seryl-[protein] + ADP + H(+). The enzyme catalyses L-threonyl-[protein] + ATP = O-phospho-L-threonyl-[protein] + ADP + H(+). In terms of biological role, in vitro, can phosphorylate histone H1. The protein is Serine/threonine-protein kinase 1 (PK1) of Lymantria dispar multicapsid nuclear polyhedrosis virus (LdMNPV).